Consider the following 641-residue polypeptide: FAD-binding monooxygenase ausB (641 aa).

The disordered stretch occupies residues 1 to 68 (MAIGPKPESI…DSTTNVPYSL (68 aa)). Over residues 49-68 (WLTSTDQPQPDSTTNVPYSL) the composition is skewed to polar residues. FAD is bound by residues 115-118 (TWYW), 127-128 (DI), and Tyr-133. 125–127 (MCD) lines the NADP(+) pocket. Residues 272 to 278 (TGSTAVQ) and 295 to 296 (RT) contribute to the NADP(+) site.

The protein belongs to the FAD-binding monooxygenase family. The cofactor is FAD.

It catalyses the reaction protoaustinoid A + AH2 + O2 = berkeleyone A + A + H2O. It participates in secondary metabolite biosynthesis; terpenoid biosynthesis. Its function is as follows. FAD-binding monooxygenase; part of the gene cluster A that mediates the biosynthesis of the fungal meroterpenoid acetoxydehydroaustin. The first step of the pathway is the synthesis of 3,5-dimethylorsellinic acid by the polyketide synthase ausA. 3,5-dimethylorsellinic acid is then prenylated by the polyprenyl transferase ausN. Further epoxidation by the FAD-dependent monooxygenase ausM and cyclization by the probable terpene cyclase ausL lead to the formation of protoaustinoid A. Protoaustinoid A is then oxidized to spiro-lactone preaustinoid A3 by the combined action of the FAD-binding monooxygenases ausB and ausC, and the dioxygenase ausE. Acid-catalyzed keto-rearrangement and ring contraction of the tetraketide portion of preaustinoid A3 by ausJ lead to the formation of preaustinoid A4. The aldo-keto reductase ausK, with the help of ausH, is involved in the next step by transforming preaustinoid A4 into isoaustinone which is in turn hydroxylated by the P450 monooxygenase ausI to form austinolide. The cytochrome P450 monooxygenase ausG then modifies austinolide to austinol. Austinol is further acetylated to austin by the O-acetyltransferase ausP, which spontaneously changes to dehydroaustin. The cytochrome P450 monooxygenase then converts dehydroaustin is into 7-dehydrodehydroaustin. The hydroxylation catalyzed by ausR permits the second O-acetyltransferase ausQ to add an additional acetyl group to the molecule, leading to the formation of acetoxydehydroaustin. Due to genetic rearrangements of the clusters and the subsequent loss of some enzymes, the end product of the Penicillium brasilianum austinoid biosynthesis clusters is acetoxydehydroaustin. This Penicillium brasilianum protein is FAD-binding monooxygenase ausB.